We begin with the raw amino-acid sequence, 558 residues long: MAELTISADDIQNAIEEYVSSFTADTFREEVGTVVDVGDSIAHVEGLPSVMTQELLEFPGGILGVALNLDEHNVGAVILGDFENIKEGQKVKRTGDVLSVPVGEAFMGRVVNPLGQPIDGRGDIEAEARRALELQAPSVVQRQSVKEPLQTGIKAIDAMTPIGRGQRQLVIGDRKTGKTAVCVDTILNQRQNWESGDPKRQVRCVYVAIGQKGTTIASVRRALEEGGAMDYTTIVAALASDSAGFKWLAPYTGSAIAQHWMYDGKHVLIVFDDLTKQAEAYRAISLLLRRPPGREAYPGDVFYLHSRLLERCAKLADHLGGGSLTGLPIIETKANDISAYIPTNVISITDGQCFLETDLFNQGVRPAINVGVSVSRVGGAAQIKAMKEVAGSLRLDLSQYRELEAFAAFASDLDATSKAQLERGARLVELLKQPQYQPMPVEEQVISLFLGTGGHLDSVPVGDVRRFETELLDHIRVAQEEILTEIRESQKLTDEAADSLTEVIKSFKKGFAATGGASVVPNEHVAALDEEKLDKESVKVHQAIPAKTSEKSKNSTPR.

172–179 (GDRKTGKT) provides a ligand contact to ATP. The segment at 536-558 (ESVKVHQAIPAKTSEKSKNSTPR) is disordered. The span at 548 to 558 (TSEKSKNSTPR) shows a compositional bias: basic and acidic residues.

This sequence belongs to the ATPase alpha/beta chains family. F-type ATPases have 2 components, CF(1) - the catalytic core - and CF(0) - the membrane proton channel. CF(1) has five subunits: alpha(3), beta(3), gamma(1), delta(1), epsilon(1). CF(0) has three main subunits: a(1), b(2) and c(9-12). The alpha and beta chains form an alternating ring which encloses part of the gamma chain. CF(1) is attached to CF(0) by a central stalk formed by the gamma and epsilon chains, while a peripheral stalk is formed by the delta and b chains.

It is found in the cell membrane. The enzyme catalyses ATP + H2O + 4 H(+)(in) = ADP + phosphate + 5 H(+)(out). Produces ATP from ADP in the presence of a proton gradient across the membrane. The alpha chain is a regulatory subunit. This is ATP synthase subunit alpha from Mycobacterium leprae (strain Br4923).